We begin with the raw amino-acid sequence, 235 residues long: Proteasome subunit alpha (235 aa).

This sequence belongs to the peptidase T1A family. In terms of assembly, the 20S proteasome core is composed of 14 alpha and 14 beta subunits that assemble into four stacked heptameric rings, resulting in a barrel-shaped structure. The two inner rings, each composed of seven catalytic beta subunits, are sandwiched by two outer rings, each composed of seven alpha subunits. The catalytic chamber with the active sites is on the inside of the barrel. Has a gated structure, the ends of the cylinder being occluded by the N-termini of the alpha-subunits. Is capped by the proteasome-associated ATPase, ARC.

The protein localises to the cytoplasm. It participates in protein degradation; proteasomal Pup-dependent pathway. With respect to regulation, the formation of the proteasomal ATPase ARC-20S proteasome complex, likely via the docking of the C-termini of ARC into the intersubunit pockets in the alpha-rings, may trigger opening of the gate for substrate entry. Interconversion between the open-gate and close-gate conformations leads to a dynamic regulation of the 20S proteasome proteolysis activity. Its function is as follows. Component of the proteasome core, a large protease complex with broad specificity involved in protein degradation. In Paenarthrobacter aurescens (strain TC1), this protein is Proteasome subunit alpha.